Consider the following 72-residue polypeptide: Translational regulator CsrA (72 aa).

It belongs to the CsrA/RsmA family. In terms of assembly, homodimer; the beta-strands of each monomer intercalate to form a hydrophobic core, while the alpha-helices form wings that extend away from the core.

Its subcellular location is the cytoplasm. In terms of biological role, a translational regulator that binds mRNA to regulate translation initiation and/or mRNA stability. Usually binds in the 5'-UTR at or near the Shine-Dalgarno sequence preventing ribosome-binding, thus repressing translation. Its main target seems to be the major flagellin gene, while its function is anatagonized by FliW. This is Translational regulator CsrA from Clostridium botulinum (strain 657 / Type Ba4).